A 512-amino-acid chain; its full sequence is MARTKATARKTVPAQQEAHGYEFGGPIGASLISFGLPIACYAFGFLCNDVSGCPPPSLLSPSKLFTPPTLSNKVPWQHALDTLAAEVGWPGWSGLINTEAVLGVFFWYGLSLLLWVLLPAHEVEGTELRTGGRLKYRFNACLSAVTIFVACAAGTIVRGPDFQVWTFINRNYIQLLTVNIIIAYALAIYVYLKSFEVKAGNTEQRELAAGGHSGHILYDWYMGRELNPRITIPFIGEVDIKSFMELRPGMIGWVLLDLAFAAKQYKSYGYITDSMRKWTPLLLGIHVLTIHPVIVIISQSVYVFDALYMEPAILTTMDLTTDGFGFMLSFGDLVWVPFIYSIQAKYLSVHPVALGPLYVALILTIQATGYYIFRATNNDKNIFRTNPNDPKVAHLKYIETGTGSRLLTTGWWGTARHINYLGDWLMSWSYCLPTLAAGYKLTPTILFENSRLVSTDGMKGAGIPITYFYMLYFAILLIHRERRDEAKCRRKYGAHWEKYCQIVRWRILPGVY.

8 helical membrane-spanning segments follow: residues 27–47 (IGAS…GFLC), 100–120 (AVLG…LLPA), 140–160 (ACLS…VRGP), 172–192 (YIQL…YVYL), 242–262 (SFME…AFAA), 278–298 (WTPL…VIIS), 324–344 (FGFM…SIQA), and 353–373 (ALGP…YYIF). NADP(+)-binding positions include K380, R384, L407, W412, and 419 to 420 (NY). 2 helical membrane passes run 418-438 (INYL…LAAG) and 458-478 (MKGA…ILLI). NADP(+) contacts are provided by residues D484, 488–492 (CRRKY), and Y499.

Belongs to the ERG4/ERG24 family.

It localises to the membrane. The enzyme catalyses 4,4-dimethyl-5alpha-cholesta-8,24-dien-3beta-ol + NADP(+) = 4,4-dimethyl-5alpha-cholesta-8,14,24-trien-3beta-ol + NADPH + H(+). The protein operates within steroid biosynthesis; zymosterol biosynthesis; zymosterol from lanosterol: step 2/6. Functionally, reduces the C14=C15 double bond of 4,4-dimethyl-cholesta-8,14,24-trienol to produce 4,4-dimethyl-cholesta-8,24-dienol. The chain is Delta(14)-sterol reductase (ERG3) from Septoria lycopersici (Tomato leaf spot fungus).